Consider the following 336-residue polypeptide: Phospho-N-acetylmuramoyl-pentapeptide-transferase (336 aa).

A run of 10 helical transmembrane segments spans residues 3 to 23 (LTLI…PYFI), 53 to 73 (GGTV…LFSI), 78 to 98 (SLAL…IGFL), 118 to 138 (LALQ…PSGI), 143 to 163 (VFGY…FWVV), 174 to 194 (GIDG…GVIA), 200 to 220 (FDVL…FCFN), 226 to 246 (VFMG…ISIA), 254 to 274 (LIIG…VFYF), and 316 to 336 (AFLW…LYVF).

The protein belongs to the glycosyltransferase 4 family. MraY subfamily. Mg(2+) serves as cofactor.

The protein resides in the cell membrane. It carries out the reaction UDP-N-acetyl-alpha-D-muramoyl-L-alanyl-gamma-D-glutamyl-L-lysyl-D-alanyl-D-alanine + di-trans,octa-cis-undecaprenyl phosphate = Mur2Ac(oyl-L-Ala-gamma-D-Glu-L-Lys-D-Ala-D-Ala)-di-trans,octa-cis-undecaprenyl diphosphate + UMP. Its pathway is cell wall biogenesis; peptidoglycan biosynthesis. In terms of biological role, catalyzes the initial step of the lipid cycle reactions in the biosynthesis of the cell wall peptidoglycan: transfers peptidoglycan precursor phospho-MurNAc-pentapeptide from UDP-MurNAc-pentapeptide onto the lipid carrier undecaprenyl phosphate, yielding undecaprenyl-pyrophosphoryl-MurNAc-pentapeptide, known as lipid I. This Streptococcus pyogenes serotype M18 (strain MGAS8232) protein is Phospho-N-acetylmuramoyl-pentapeptide-transferase.